A 207-amino-acid chain; its full sequence is Carbonic anhydrase 2 (207 aa).

Residues Cys-51, Asp-53, His-104, and Cys-107 each coordinate Zn(2+).

It belongs to the beta-class carbonic anhydrase family. Zn(2+) is required as a cofactor.

It carries out the reaction hydrogencarbonate + H(+) = CO2 + H2O. In terms of biological role, catalyzes the reversible hydration of carbon dioxide to form bicarbonate. The sequence is that of Carbonic anhydrase 2 (mtcA2) from Mycobacterium tuberculosis (strain CDC 1551 / Oshkosh).